The chain runs to 404 residues: Serine/threonine transporter SstT (404 aa).

The next 9 membrane-spanning stretches (helical) occupy residues 17–37, 44–64, 75–95, 138–158, 179–199, 212–232, 287–307, 319–339, and 354–374; these read IGIG…VTAI, FVGA…VQAI, ITLI…VAVI, ALAT…GLAL, IVVW…FSTV, LLIL…NPLL, IPLG…VLTL, FLTA…ASGV, and FGIS…VGVI.

The protein belongs to the dicarboxylate/amino acid:cation symporter (DAACS) (TC 2.A.23) family.

The protein resides in the cell membrane. The enzyme catalyses L-serine(in) + Na(+)(in) = L-serine(out) + Na(+)(out). It carries out the reaction L-threonine(in) + Na(+)(in) = L-threonine(out) + Na(+)(out). In terms of biological role, involved in the import of serine and threonine into the cell, with the concomitant import of sodium (symport system). The chain is Serine/threonine transporter SstT from Streptococcus equi subsp. zooepidemicus (strain MGCS10565).